The sequence spans 88 residues: uncharacterized protein (88 aa).

As to expression, expressed in a wide variety of tissues.

This is an uncharacterized protein from Homo sapiens (Human).